A 938-amino-acid polypeptide reads, in one-letter code: Breast cancer type 2 susceptibility protein homolog (938 aa).

2 stretches are compositionally biased toward basic and acidic residues: residues leucine 320–isoleucine 339 and asparagine 409–asparagine 425. Disordered regions lie at residues leucine 320–leucine 359 and asparagine 409–glutamine 434. BRCA2 repeat units lie at residues alanine 537 to tyrosine 571, asparagine 638 to alanine 672, and serine 713 to alanine 747. Residues serine 870–alanine 879 are compositionally biased toward polar residues. The segment at serine 870 to tyrosine 938 is disordered. A compositionally biased stretch (basic and acidic residues) spans alanine 898–alanine 915. The segment covering lysine 926–tyrosine 938 has biased composition (basic residues).

In terms of assembly, interacts with Rad9 and spn-A/Rad51.

It localises to the nucleus. In terms of biological role, involved in and required for double-strand break repair by meiotic and mitotic homologous recombination. During meiosis, has a dual role in the repair of meiotic double-stranded breaks and the efficient activation of the meiotic recombination checkpoint. The polypeptide is Breast cancer type 2 susceptibility protein homolog (Drosophila sechellia (Fruit fly)).